The primary structure comprises 925 residues: Protein translocase subunit SecA (925 aa).

Residues Gln87, 105–109 (GEGKT), and Asp512 contribute to the ATP site. Residues Cys910, Cys912, Cys921, and His922 each contribute to the Zn(2+) site.

The protein belongs to the SecA family. As to quaternary structure, monomer and homodimer. Part of the essential Sec protein translocation apparatus which comprises SecA, SecYEG and auxiliary proteins SecDF-YajC and YidC. The cofactor is Zn(2+).

It localises to the cell inner membrane. The protein localises to the cytoplasm. It carries out the reaction ATP + H2O + cellular proteinSide 1 = ADP + phosphate + cellular proteinSide 2.. Part of the Sec protein translocase complex. Interacts with the SecYEG preprotein conducting channel. Has a central role in coupling the hydrolysis of ATP to the transfer of proteins into and across the cell membrane, serving both as a receptor for the preprotein-SecB complex and as an ATP-driven molecular motor driving the stepwise translocation of polypeptide chains across the membrane. In Psychrobacter sp. (strain PRwf-1), this protein is Protein translocase subunit SecA.